Consider the following 352-residue polypeptide: Glutamine synthetase (352 aa).

Positions 3–82 constitute a GS beta-grasp domain; the sequence is YQAEYIWIDG…LCEVQLTDFT (80 aa). The GS catalytic domain maps to 87–352; sequence TRAAALGVAE…TTPAPAEASV (266 aa). Mg(2+) contacts are provided by Glu108 and Glu110. Position 164 (Glu164) interacts with ATP. Residues Glu169 and Glu176 each contribute to the Mg(2+) site. Glu272 serves as a coordination point for L-glutamate.

It belongs to the glutamine synthetase family. Homooctamer and homotetramer. Mg(2+) serves as cofactor.

It is found in the cytoplasm. The catalysed reaction is L-glutamate + NH4(+) + ATP = L-glutamine + ADP + phosphate + H(+). Functionally, catalyzes the ATP-dependent biosynthesis of glutamine from glutamate and ammonia. The chain is Glutamine synthetase from Frankia alni.